A 60-amino-acid polypeptide reads, in one-letter code: Large ribosomal subunit protein bL33 (60 aa).

This sequence belongs to the bacterial ribosomal protein bL33 family.

This is Large ribosomal subunit protein bL33 from Chlorobium phaeobacteroides (strain DSM 266 / SMG 266 / 2430).